The chain runs to 203 residues: ATP-dependent Clp protease proteolytic subunit 1 (203 aa).

S101 (nucleophile) is an active-site residue. H126 is an active-site residue.

It belongs to the peptidase S14 family. Fourteen ClpP subunits assemble into 2 heptameric rings which stack back to back to give a disk-like structure with a central cavity, resembling the structure of eukaryotic proteasomes.

The protein localises to the cytoplasm. It carries out the reaction Hydrolysis of proteins to small peptides in the presence of ATP and magnesium. alpha-casein is the usual test substrate. In the absence of ATP, only oligopeptides shorter than five residues are hydrolyzed (such as succinyl-Leu-Tyr-|-NHMec, and Leu-Tyr-Leu-|-Tyr-Trp, in which cleavage of the -Tyr-|-Leu- and -Tyr-|-Trp bonds also occurs).. In terms of biological role, cleaves peptides in various proteins in a process that requires ATP hydrolysis. Has a chymotrypsin-like activity. Plays a major role in the degradation of misfolded proteins. This is ATP-dependent Clp protease proteolytic subunit 1 from Synechococcus sp. (strain JA-3-3Ab) (Cyanobacteria bacterium Yellowstone A-Prime).